Here is a 93-residue protein sequence, read N- to C-terminus: Small ribosomal subunit protein uS19 (93 aa).

It belongs to the universal ribosomal protein uS19 family.

Functionally, protein S19 forms a complex with S13 that binds strongly to the 16S ribosomal RNA. This is Small ribosomal subunit protein uS19 from Mycobacterium marinum (strain ATCC BAA-535 / M).